Reading from the N-terminus, the 315-residue chain is Homoserine kinase (315 aa).

97–107 (PPARGLGSSAT) is a binding site for ATP.

Belongs to the GHMP kinase family. Homoserine kinase subfamily.

The protein resides in the cytoplasm. It carries out the reaction L-homoserine + ATP = O-phospho-L-homoserine + ADP + H(+). The protein operates within amino-acid biosynthesis; L-threonine biosynthesis; L-threonine from L-aspartate: step 4/5. Its function is as follows. Catalyzes the ATP-dependent phosphorylation of L-homoserine to L-homoserine phosphate. The sequence is that of Homoserine kinase from Prochlorococcus marinus (strain MIT 9301).